A 303-amino-acid polypeptide reads, in one-letter code: Short chain dehydrogenase pigC (303 aa).

Isoleucine 45, aspartate 103, asparagine 130, arginine 164, tyrosine 196, lysine 200, and threonine 231 together coordinate NADP(+). Residue tyrosine 196 is the Proton donor of the active site. Lysine 200 (lowers pKa of active site Tyr) is an active-site residue.

This sequence belongs to the short-chain dehydrogenases/reductases (SDR) family.

It functions in the pathway secondary metabolite biosynthesis. In terms of biological role, short chain dehydrogenase; part of the gene cluster that mediates the biosynthesis of azaphilone pigments (MonAzPs), a complex mixture of compounds with a common azaphilone skeleton very widely used as food colorants. Within the pathway, pigC intercepts the very reactive benzaldehyde produced by the nrPKS pigA to reduce the omega-1 carbonyl to the alcohol to provide the first stable enzyme-free MonAzPs intermediate, 6-(4-hydroxy-2-oxopentyl)-3-methyl-2,4-dioxocyclohexane carbaldehyde, also known as M7PKS-1. The first step of the pathway is performed by the nrPKS pigA that forms the hexaketide precursor from successive condensations of five malonyl-CoA units, with a simple acetyl-CoA starter unit. The role of esterase pigG is not clear, but it may play at most a supplementary role in the formation of the benzaldehyde produced by the pigA nrPKS. This very reactive benzaldehyde is intercepted by the pigC ketoreductase that to provide the first stable enzyme-free MonAzPs intermediate, M7PKS-1. The FAD-dependent monooxygenase pigN hydroxylates M7PKS-1 at C-4, which triggers the formation of the pyran ring. PigJ, pigK and pigD are involved in the acetylation of the pyran ring. PigJ and pigK form the two subunits of a dedicated fungal FAS that produces the side chain fatty acyl moiety of MonAzPs and pigD transfers the fatty acyl chain to the C-4 alcohol. PigM and pigO are involved in the elimination of the omega-1 alcohol. PigM acts as an O-acetyltransferase that synthesizes the putative O-11 acetyl intermediate whereas pigO eliminates acetic acid to yield an intermediate with a C10(11) double bond. The dehydration of the C-11 alcohol followed by the reduction of the C6(7) double bond by the NAD(P)H-dependent oxidoreductase pigE increases the electrophilicity of the C-5 ketone of the resulting acyl benzopyran. This in turn sets up the C-5 ketone for an intramolecular Knoevenagel aldol condensation with the C-20 enol of the side chain. This condensation affords the characteristic linear tricyclic carbon skeletons of the yellow pigments that serve as the common precursors for the classical yellow pigments monascin and ankaflavin, orange pigments rubopunctatin and monascorubrin, and red pigments ribropunctamine and monascorubramine. The FAD-dependent oxidoreductase pigF is especially invoved in the biosynthesis of orange and red pigments via desaturation of C6(7). The sequence is that of Short chain dehydrogenase pigC from Monascus ruber (Mold).